The sequence spans 117 residues: Small ribosomal subunit protein bS6 (117 aa).

Residues threonine 97 to asparagine 117 form a disordered region.

It belongs to the bacterial ribosomal protein bS6 family.

Functionally, binds together with bS18 to 16S ribosomal RNA. The polypeptide is Small ribosomal subunit protein bS6 (Maricaulis maris (strain MCS10) (Caulobacter maris)).